The following is a 270-amino-acid chain: Diaminopimelate epimerase (270 aa).

Positions 15, 49, and 66 each coordinate substrate. The active-site Proton donor is the Cys75. Substrate-binding positions include 76–77, Asn155, Asn187, and 204–205; these read GN and ER. Cys213 (proton acceptor) is an active-site residue. 214 to 215 lines the substrate pocket; it reads GS.

Belongs to the diaminopimelate epimerase family. In terms of assembly, homodimer.

It is found in the cytoplasm. The enzyme catalyses (2S,6S)-2,6-diaminopimelate = meso-2,6-diaminopimelate. It participates in amino-acid biosynthesis; L-lysine biosynthesis via DAP pathway; DL-2,6-diaminopimelate from LL-2,6-diaminopimelate: step 1/1. Catalyzes the stereoinversion of LL-2,6-diaminopimelate (L,L-DAP) to meso-diaminopimelate (meso-DAP), a precursor of L-lysine and an essential component of the bacterial peptidoglycan. In Rickettsia rickettsii (strain Iowa), this protein is Diaminopimelate epimerase.